The primary structure comprises 121 residues: uncharacterized protein (121 aa).

This sequence to M.jannaschii MJ0017 and MJ1466.

This is an uncharacterized protein from Aquifex aeolicus (strain VF5).